The primary structure comprises 356 residues: Glutamine synthetase PR-2 (356 aa).

The region spanning 19 to 99 is the GS beta-grasp domain; the sequence is IIAEYIWVGG…VICDVYTPAG (81 aa). The disordered stretch occupies residues 37-66; the sequence is ARTLPGPVDDPAKLPKWNYDGSSTDQAPGD. A GS catalytic domain is found at 106 to 356; the sequence is KRYDAAKIFS…IAETTILWKP (251 aa).

The protein belongs to the glutamine synthetase family. Homooctamer. Roots.

The protein localises to the cytoplasm. It catalyses the reaction L-glutamate + NH4(+) + ATP = L-glutamine + ADP + phosphate + H(+). This is Glutamine synthetase PR-2 from Phaseolus vulgaris (Kidney bean).